The chain runs to 505 residues: Transcription factor APG (505 aa).

Disordered stretches follow at residues 1-40, 61-99, 119-156, 169-242, 256-312, 324-344, and 469-505; these read MLRG…CSAA, GAAN…DTAP, PAAA…SGGG, PLQQ…APTT, AQRL…SQDE, RRSA…NLSE, and PPPP…VKQA. The segment covering 23–33 has biased composition (pro residues); the sequence is PLRPPPPPPFQ. Polar residues predominate over residues 131 to 144; it reads CSSSHGAVVPSTSA. Low complexity predominate over residues 174-199; the sequence is PSGGETASASASAAATSTVPVESTVV. Over residues 200-212 the composition is skewed to polar residues; it reads QAATNRLRSTPLF. Positions 222–239 are enriched in pro residues; that stretch reads PPKPSPRAAAPPPPPPLA. The span at 288–299 shows a compositional bias: basic and acidic residues; that stretch reads GDRRQLNWRDSH. Residues 300–310 show a composition bias toward polar residues; sequence NNQSAEWSASQ. Basic residues predominate over residues 324-334; sequence RRSAARSSKRS. Residues 335-344 are compositionally biased toward basic and acidic residues; sequence RTAEVHNLSE. In terms of domain architecture, bHLH spans 335–384; it reads RTAEVHNLSERRRRDRINEKMRALQELIPNCNKIDKASMLEEAIEYLKTL. Low complexity predominate over residues 492 to 505; sequence GAADAGNAPAVKQA.

This sequence belongs to the bHLH protein family. Homodimer and heterodimer with ILI5 or ILI6.

It is found in the nucleus. Atypical bHLH transcription factor that acts as a negative regulator of grain size. Binds the transcription factor ILI6 and forms a heterodimer of antagonistic bHLH transcription factors that regulates grain length and weight by controlling cell elongation in lemma and palea. May be involved in the control of lamina inclination through brassinosteroid signaling pathway. In Oryza sativa subsp. japonica (Rice), this protein is Transcription factor APG (APG).